Consider the following 621-residue polypeptide: 1-deoxy-D-xylulose-5-phosphate synthase (621 aa).

Thiamine diphosphate contacts are provided by residues His80 and 121–123; that span reads GHS. Asp152 lines the Mg(2+) pocket. Residues 153-154, Asn181, Tyr288, and Glu370 contribute to the thiamine diphosphate site; that span reads GA. Asn181 lines the Mg(2+) pocket.

It belongs to the transketolase family. DXPS subfamily. Homodimer. It depends on Mg(2+) as a cofactor. The cofactor is thiamine diphosphate.

It carries out the reaction D-glyceraldehyde 3-phosphate + pyruvate + H(+) = 1-deoxy-D-xylulose 5-phosphate + CO2. Its pathway is metabolic intermediate biosynthesis; 1-deoxy-D-xylulose 5-phosphate biosynthesis; 1-deoxy-D-xylulose 5-phosphate from D-glyceraldehyde 3-phosphate and pyruvate: step 1/1. Functionally, catalyzes the acyloin condensation reaction between C atoms 2 and 3 of pyruvate and glyceraldehyde 3-phosphate to yield 1-deoxy-D-xylulose-5-phosphate (DXP). The protein is 1-deoxy-D-xylulose-5-phosphate synthase of Shewanella woodyi (strain ATCC 51908 / MS32).